Consider the following 360-residue polypeptide: Tubulin-like protein CetZ2 (360 aa).

GTP is bound by residues Q10–K14, G65–G66, G106–G108, E138, N165, and N183. Residues E334–D354 show a composition bias toward basic and acidic residues. The tract at residues E334 to L360 is disordered.

The protein belongs to the CetZ family.

The protein resides in the cytoplasm. In terms of biological role, involved in cell shape control. This is Tubulin-like protein CetZ2 from Haloferax volcanii (strain ATCC 29605 / DSM 3757 / JCM 8879 / NBRC 14742 / NCIMB 2012 / VKM B-1768 / DS2) (Halobacterium volcanii).